The sequence spans 60 residues: Beta-defensin 11 (60 aa).

Positions 1–22 are cleaved as a signal peptide; the sequence is MRLHHLLLALLFLVLSAGSGIS. Disulfide bonds link cysteine 27–cysteine 56, cysteine 34–cysteine 49, and cysteine 39–cysteine 57.

It belongs to the beta-defensin family. Neutrophilic granules.

It is found in the secreted. Functionally, has bactericidal activity. Active against E.coli ML35 and S.aureus 502A. This is Beta-defensin 11 (DEFB11) from Bos taurus (Bovine).